Reading from the N-terminus, the 206-residue chain is N-(5'-phosphoribosyl)anthranilate isomerase (206 aa).

It belongs to the TrpF family.

The enzyme catalyses N-(5-phospho-beta-D-ribosyl)anthranilate = 1-(2-carboxyphenylamino)-1-deoxy-D-ribulose 5-phosphate. It functions in the pathway amino-acid biosynthesis; L-tryptophan biosynthesis; L-tryptophan from chorismate: step 3/5. The polypeptide is N-(5'-phosphoribosyl)anthranilate isomerase (Pseudomonas putida (strain ATCC 47054 / DSM 6125 / CFBP 8728 / NCIMB 11950 / KT2440)).